The following is a 254-amino-acid chain: Type III pantothenate kinase (254 aa).

An ATP-binding site is contributed by 7-14; sequence DVGNTRLK. Substrate-binding positions include Y96 and 103–106; that span reads GSDR. The active-site Proton acceptor is D105. An ATP-binding site is contributed by T133. Residue T183 participates in substrate binding.

The protein belongs to the type III pantothenate kinase family. In terms of assembly, homodimer. Requires NH4(+) as cofactor. K(+) is required as a cofactor.

The protein resides in the cytoplasm. It catalyses the reaction (R)-pantothenate + ATP = (R)-4'-phosphopantothenate + ADP + H(+). Its pathway is cofactor biosynthesis; coenzyme A biosynthesis; CoA from (R)-pantothenate: step 1/5. In terms of biological role, catalyzes the phosphorylation of pantothenate (Pan), the first step in CoA biosynthesis. The sequence is that of Type III pantothenate kinase from Paracidovorax citrulli (strain AAC00-1) (Acidovorax citrulli).